The sequence spans 368 residues: Agmatine deiminase (368 aa).

Cys-357 serves as the catalytic Amidino-cysteine intermediate.

It belongs to the agmatine deiminase family. Homodimer.

It carries out the reaction agmatine + H2O = N-carbamoylputrescine + NH4(+). The protein operates within amine and polyamine biosynthesis; putrescine biosynthesis via agmatine pathway; N-carbamoylputrescine from agmatine: step 1/1. Functionally, mediates the hydrolysis of agmatine into N-carbamoylputrescine in the arginine decarboxylase (ADC) pathway of putrescine biosynthesis, a basic polyamine. This is Agmatine deiminase from Pseudomonas savastanoi pv. phaseolicola (strain 1448A / Race 6) (Pseudomonas syringae pv. phaseolicola (strain 1448A / Race 6)).